Consider the following 399-residue polypeptide: Imidazolonepropionase (399 aa).

The span at M1–A13 shows a compositional bias: polar residues. The interval M1–Q20 is disordered. Residues H74 and H76 each contribute to the Fe(3+) site. Positions 74 and 76 each coordinate Zn(2+). 4-imidazolone-5-propanoate contacts are provided by R83, Y146, and H176. N-formimidoyl-L-glutamate is bound at residue Y146. Position 238 (H238) interacts with Fe(3+). A Zn(2+)-binding site is contributed by H238. Q241 serves as a coordination point for 4-imidazolone-5-propanoate. D312 is a Fe(3+) binding site. D312 is a Zn(2+) binding site. Residues N314 and G316 each contribute to the N-formimidoyl-L-glutamate site. S317 is a 4-imidazolone-5-propanoate binding site.

Belongs to the metallo-dependent hydrolases superfamily. HutI family. The cofactor is Zn(2+). Requires Fe(3+) as cofactor.

It is found in the cytoplasm. It carries out the reaction 4-imidazolone-5-propanoate + H2O = N-formimidoyl-L-glutamate. Its pathway is amino-acid degradation; L-histidine degradation into L-glutamate; N-formimidoyl-L-glutamate from L-histidine: step 3/3. Its function is as follows. Catalyzes the hydrolytic cleavage of the carbon-nitrogen bond in imidazolone-5-propanoate to yield N-formimidoyl-L-glutamate. It is the third step in the universal histidine degradation pathway. The chain is Imidazolonepropionase from Deinococcus radiodurans (strain ATCC 13939 / DSM 20539 / JCM 16871 / CCUG 27074 / LMG 4051 / NBRC 15346 / NCIMB 9279 / VKM B-1422 / R1).